A 169-amino-acid polypeptide reads, in one-letter code: PTS system glucose-specific EIIA component (169 aa).

The PTS EIIA type-1 domain occupies 39–143 (DVVFAEKIVG…STLTPVVISN (105 aa)). Positions 76 and 91 each coordinate Zn(2+). The active-site Tele-phosphohistidine intermediate; for EIIA activity is His91. His91 is subject to Phosphohistidine; by HPr.

In terms of assembly, heterodimer with glycerol kinase (glpk). Requires Zn(2+) as cofactor.

It is found in the cytoplasm. The phosphoenolpyruvate-dependent sugar phosphotransferase system (sugar PTS), a major carbohydrate active transport system, catalyzes the phosphorylation of incoming sugar substrates concomitantly with their translocation across the cell membrane. The enzyme II complex composed of PtsG and Crr is involved in glucose transport. The polypeptide is PTS system glucose-specific EIIA component (crr) (Escherichia coli O6:H1 (strain CFT073 / ATCC 700928 / UPEC)).